Reading from the N-terminus, the 362-residue chain is tRNA/tmRNA (uracil-C(5))-methyltransferase (362 aa).

Q186, Y214, N219, E235, and D295 together coordinate S-adenosyl-L-methionine. C320 acts as the Nucleophile in catalysis. E354 (proton acceptor) is an active-site residue.

The protein belongs to the class I-like SAM-binding methyltransferase superfamily. RNA M5U methyltransferase family. TrmA subfamily.

The catalysed reaction is uridine(54) in tRNA + S-adenosyl-L-methionine = 5-methyluridine(54) in tRNA + S-adenosyl-L-homocysteine + H(+). It carries out the reaction uridine(341) in tmRNA + S-adenosyl-L-methionine = 5-methyluridine(341) in tmRNA + S-adenosyl-L-homocysteine + H(+). Functionally, dual-specificity methyltransferase that catalyzes the formation of 5-methyluridine at position 54 (m5U54) in all tRNAs, and that of position 341 (m5U341) in tmRNA (transfer-mRNA). This is tRNA/tmRNA (uracil-C(5))-methyltransferase from Dechloromonas aromatica (strain RCB).